The primary structure comprises 399 residues: Phosphoglycerate kinase (399 aa).

Residues 22–24, R37, 60–63, R119, and R152 each bind substrate; these read DLN and HFGR. ATP is bound by residues K202, E324, and 354 to 357; that span reads GGDT.

It belongs to the phosphoglycerate kinase family. As to quaternary structure, monomer.

Its subcellular location is the cytoplasm. It catalyses the reaction (2R)-3-phosphoglycerate + ATP = (2R)-3-phospho-glyceroyl phosphate + ADP. Its pathway is carbohydrate degradation; glycolysis; pyruvate from D-glyceraldehyde 3-phosphate: step 2/5. The sequence is that of Phosphoglycerate kinase from Rhizobium meliloti (strain 1021) (Ensifer meliloti).